The sequence spans 446 residues: Phosphoglucosamine mutase (446 aa).

The Phosphoserine intermediate role is filled by Ser100. Positions 100, 239, 241, and 243 each coordinate Mg(2+). Residue Ser100 is modified to Phosphoserine.

The protein belongs to the phosphohexose mutase family. The cofactor is Mg(2+). Activated by phosphorylation.

The enzyme catalyses alpha-D-glucosamine 1-phosphate = D-glucosamine 6-phosphate. In terms of biological role, catalyzes the conversion of glucosamine-6-phosphate to glucosamine-1-phosphate. The chain is Phosphoglucosamine mutase from Oceanobacillus iheyensis (strain DSM 14371 / CIP 107618 / JCM 11309 / KCTC 3954 / HTE831).